The primary structure comprises 197 residues: Class A basic helix-loop-helix protein 15 (197 aa).

The segment covering 1–12 has biased composition (basic residues); that stretch reads MKTKNRPPRRRT. 2 disordered regions span residues 1 to 82 and 175 to 197; these read MKTK…ERER and TEDQ…REGS. Phosphothreonine occurs at positions 12 and 25. Polar residues predominate over residues 27 to 36; the sequence is DRSQSGSGAS. The span at 65 to 82 shows a compositional bias: basic and acidic residues; the sequence is SRRENSVQRRLESNERER. The region spanning 72-124 is the bHLH domain; sequence QRRLESNERERQRMHKLNNAFQALREVIPHVRADKKLSKIETLTLAKNYIKSL.

Forms homodimers or heterodimers with TCF3 gene products E12 and E47. These dimers bind to the E-box site, however, heterodimer with MYOD1 does not bind target DNA. As to expression, expressed in liver, spleen and olfactory epithelium. Weaker expression is seen in skeletal muscle, cardiac muscle, eye and brain tissue.

Its subcellular location is the nucleus. Plays a role in controlling the transcriptional activity of MyoD, ensuring that expanding myoblast populations remain undifferentiated. Repression may occur through muscle-specific E-box occupancy by homodimers. May also negatively regulate bHLH-mediated transcription through an N-terminal repressor domain. Serves as a key regulator of acinar cell function, stability, and identity. Also required for normal organelle localization in exocrine cells and for mitochondrial calcium ion transport. May function as a unique regulator of gene expression in several different embryonic and postnatal cell lineages. Binds to the E-box consensus sequence 5'-CANNTG-3'. In Rattus norvegicus (Rat), this protein is Class A basic helix-loop-helix protein 15 (Bhlha15).